Reading from the N-terminus, the 446-residue chain is Exopolygalacturonase (446 aa).

The first 17 residues, 1–17, serve as a signal peptide directing secretion; the sequence is MRVTDIISCALLQASIA. N-linked (GlcNAc...) asparagine glycosylation is found at Asn-53, Asn-118, Asn-134, and Asn-204. One copy of the PbH1 1 repeat lies at 236 to 257; it reads SDNIIIQNSNINNGDDCVSFKP. Catalysis depends on Asp-250, which acts as the Proton donor. Residues Cys-252 and Cys-269 are joined by a disulfide bond. Asn-258 and Asn-270 each carry an N-linked (GlcNAc...) asparagine glycan. 3 PbH1 repeats span residues 259-279, 290-311, and 332-353; these read STNILVQNLVCNGSHGISVGS, VENILVRNISMSNASDGARIKV, and VRNVTYDGMIVKNVDYAIEITQ. His-273 is an active-site residue. N-linked (GlcNAc...) asparagine glycosylation is found at Asn-297, Asn-302, Asn-334, Asn-359, and Asn-369. 2 PbH1 repeats span residues 367–398 and 403–434; these read PSNLTISDITIKNFKGTTSKKYDPRVGYVVCS and CSDISIENIDVKSPSGTNLFTCANAEGIQSQV. 2 disulfides stabilise this stretch: Cys-397–Cys-403 and Cys-424–Cys-436. Asn-435 is a glycosylation site (N-linked (GlcNAc...) asparagine).

The protein belongs to the glycosyl hydrolase 28 family.

The protein resides in the secreted. It catalyses the reaction [(1-&gt;4)-alpha-D-galacturonosyl](n) + H2O = alpha-D-galacturonate + [(1-&gt;4)-alpha-D-galacturonosyl](n-1). Hydrolysis of 1,4-alpha-D-galactosiduronic linkages in pectate and other galacturonans. This Cochliobolus carbonum (Maize leaf spot fungus) protein is Exopolygalacturonase (PGX1).